The following is a 706-amino-acid chain: G2/M phase-specific E3 ubiquitin-protein ligase (706 aa).

The segment at 11-51 (NLACVFCRKNDDCPNKYGEKKTKEKWNLTVHYYCLLMSSGI) adopts a C2HC pre-PHD-type zinc-finger fold. The segment at 79–128 (LKCCVCKKNGASIGCVAPRCKRSYHFPCGLQRECIFQFTGNFASFCWNHR) adopts a PHD-type 1 zinc-finger fold. Residues 143–193 (PCTICLEFIEPIPSYNILRSPCCKNAWFHRDCLQVQAINAGVFFFRCTICS) form a PHD-type 2; degenerate zinc finger. The PHD-type 3 zinc finger occupies 237–286 (RCRCKEGRDYNAPDSKWEIKRCQCCGSSGTHLACSSLRSWEQNWECLECR). Residues 371–698 (IWTSALDAFR…IRNTLKLEKE (328 aa)) enclose the HECT domain.

Its subcellular location is the nucleus. The protein resides in the nucleolus. The protein localises to the cytoplasm. It carries out the reaction S-ubiquitinyl-[E2 ubiquitin-conjugating enzyme]-L-cysteine + [acceptor protein]-L-lysine = [E2 ubiquitin-conjugating enzyme]-L-cysteine + N(6)-ubiquitinyl-[acceptor protein]-L-lysine.. Its pathway is protein modification; protein ubiquitination. Functionally, E3 ubiquitin-protein ligase which accepts ubiquitin from an E2 ubiquitin-conjugating enzyme in the form of a thioester and then directly transfers the ubiquitin to targeted substrates. Essential in early embryonic development to prevent apoptotic death. The polypeptide is G2/M phase-specific E3 ubiquitin-protein ligase (G2E3) (Macaca fascicularis (Crab-eating macaque)).